The following is a 302-amino-acid chain: Glutaminase (302 aa).

Substrate-binding residues include S61, N111, E155, N162, Y186, Y238, and V256.

Belongs to the glutaminase family. As to quaternary structure, homotetramer.

The enzyme catalyses L-glutamine + H2O = L-glutamate + NH4(+). The protein is Glutaminase of Pseudomonas aeruginosa (strain LESB58).